The following is a 168-amino-acid chain: Endoribonuclease YbeY (168 aa).

Zn(2+) is bound by residues His128, His132, and His138.

It belongs to the endoribonuclease YbeY family. Zn(2+) serves as cofactor.

It is found in the cytoplasm. In terms of biological role, single strand-specific metallo-endoribonuclease involved in late-stage 70S ribosome quality control and in maturation of the 3' terminus of the 16S rRNA. The protein is Endoribonuclease YbeY of Sphingopyxis alaskensis (strain DSM 13593 / LMG 18877 / RB2256) (Sphingomonas alaskensis).